The chain runs to 731 residues: Gelsolin (731 aa).

The actin-severing stretch occupies residues 2–125; the sequence is VVEHPEFLKA…YKKGGVASGF (124 aa). The stretch at 25–107 is one Gelsolin-like 1 repeat; sequence FDLVPVPPNL…VQGFESATFL (83 aa). Tyr-35 is subject to Phosphotyrosine. Ca(2+) contacts are provided by Gly-41, Asp-42, Glu-73, Asp-85, Gly-90, and Ala-92. The actin-actin interfilament contact point stretch occupies residues 72-75; that stretch reads DESG. 111–118 is an a 1,2-diacyl-sn-glycero-3-phospho-(1D-myo-inositol-4,5-bisphosphate) binding site; sequence KSGLKYKK. Val-121 contributes to the Ca(2+) binding site. 137–145 provides a ligand contact to a 1,2-diacyl-sn-glycero-3-phospho-(1D-myo-inositol-4,5-bisphosphate); sequence RLFQVKGRR. A Gelsolin-like 2 repeat occupies 147 to 219; the sequence is VRATEVPVSW…SEEGAEPEAM (73 aa). 2 residues coordinate Ca(2+): Gly-162 and Asp-163. Cys-164 and Cys-177 are oxidised to a cystine. A Ca(2+)-binding site is contributed by Glu-185. A compositionally biased stretch (basic and acidic residues) spans 197-211; sequence RDNERSGRARVHVSE. Residues 197–216 form a disordered region; the sequence is RDNERSGRARVHVSEEGAEP. Ca(2+)-binding residues include Asp-235, Glu-278, Asp-279, and Glu-303. Residues 266-338 form a Gelsolin-like 3 repeat; it reads DENPFAQGAL…LPEGGETPLF (73 aa). Phosphotyrosine is present on residues Tyr-358 and Tyr-414. The actin-binding, Ca-sensitive stretch occupies residues 383–731; sequence AAQHGMDDDG…LDRALAELAA (349 aa). Residues 404–485 form a Gelsolin-like 4 repeat; it reads SDKVPVDPAT…VQGKEPAHLM (82 aa). Ca(2+) is bound by residues Gly-420, Asp-421, Glu-451, Asp-463, Gly-468, Pro-470, and Thr-500. The Gelsolin-like 5 repeat unit spans residues 527-591; the sequence is AVEVMPKAGA…AEGSEPDSFW (65 aa). Lys-533 carries the N6-acetyllysine modification. Positions 540 and 541 each coordinate Ca(2+). A Phosphotyrosine modification is found at Tyr-552. Glu-563 is a Ca(2+) binding site. Tyr-600 is modified (phosphotyrosine). The stretch at 630–705 is one Gelsolin-like 6 repeat; it reads IEEVPGELMQ…VKQGFEPPSF (76 aa). Positions 645, 646, and 668 each coordinate Ca(2+). Thr-691 is modified (phosphothreonine).

Belongs to the villin/gelsolin family. Binds to actin and to fibronectin. Identified in a complex composed of ACTA1, COBL, GSN and TMSB4X. Interacts with the inactive form of EIF2AK2/PKR. Interacts with FLII.

Its subcellular location is the cytoplasm. It localises to the cytoskeleton. Calcium-regulated, actin-modulating protein that binds to the plus (or barbed) ends of actin monomers or filaments, preventing monomer exchange (end-blocking or capping). It can promote the assembly of monomers into filaments (nucleation) as well as sever filaments already formed. Plays a role in ciliogenesis. The chain is Gelsolin (GSN) from Bos taurus (Bovine).